The primary structure comprises 149 residues: 6,7-dimethyl-8-ribityllumazine synthase (149 aa).

Residues Phe-22, 56–58 (ALE), and 80–82 (AVI) contribute to the 5-amino-6-(D-ribitylamino)uracil site. Residue 85–86 (ET) participates in (2S)-2-hydroxy-3-oxobutyl phosphate binding. The Proton donor role is filled by His-88. Residue Asn-113 participates in 5-amino-6-(D-ribitylamino)uracil binding. Arg-127 is a binding site for (2S)-2-hydroxy-3-oxobutyl phosphate.

This sequence belongs to the DMRL synthase family.

It catalyses the reaction (2S)-2-hydroxy-3-oxobutyl phosphate + 5-amino-6-(D-ribitylamino)uracil = 6,7-dimethyl-8-(1-D-ribityl)lumazine + phosphate + 2 H2O + H(+). The protein operates within cofactor biosynthesis; riboflavin biosynthesis; riboflavin from 2-hydroxy-3-oxobutyl phosphate and 5-amino-6-(D-ribitylamino)uracil: step 1/2. In terms of biological role, catalyzes the formation of 6,7-dimethyl-8-ribityllumazine by condensation of 5-amino-6-(D-ribitylamino)uracil with 3,4-dihydroxy-2-butanone 4-phosphate. This is the penultimate step in the biosynthesis of riboflavin. This Methylobacillus flagellatus (strain ATCC 51484 / DSM 6875 / VKM B-1610 / KT) protein is 6,7-dimethyl-8-ribityllumazine synthase.